Reading from the N-terminus, the 804-residue chain is Leucine--tRNA ligase (804 aa).

The short motif at 39 to 50 is the 'HIGH' region element; that stretch reads PYPSGKGLHVGH. A 'KMSKS' region motif is present at residues 573-577; it reads KMSKS. K576 lines the ATP pocket.

The protein belongs to the class-I aminoacyl-tRNA synthetase family.

The protein resides in the cytoplasm. It carries out the reaction tRNA(Leu) + L-leucine + ATP = L-leucyl-tRNA(Leu) + AMP + diphosphate. The chain is Leucine--tRNA ligase from Lactobacillus delbrueckii subsp. bulgaricus (strain ATCC 11842 / DSM 20081 / BCRC 10696 / JCM 1002 / NBRC 13953 / NCIMB 11778 / NCTC 12712 / WDCM 00102 / Lb 14).